Here is a 473-residue protein sequence, read N- to C-terminus: ATP synthase subunit beta (473 aa).

An ATP-binding site is contributed by 158 to 165 (GGAGVGKT).

This sequence belongs to the ATPase alpha/beta chains family. In terms of assembly, F-type ATPases have 2 components, CF(1) - the catalytic core - and CF(0) - the membrane proton channel. CF(1) has five subunits: alpha(3), beta(3), gamma(1), delta(1), epsilon(1). CF(0) has three main subunits: a(1), b(2) and c(9-12). The alpha and beta chains form an alternating ring which encloses part of the gamma chain. CF(1) is attached to CF(0) by a central stalk formed by the gamma and epsilon chains, while a peripheral stalk is formed by the delta and b chains.

The protein localises to the cell membrane. It carries out the reaction ATP + H2O + 4 H(+)(in) = ADP + phosphate + 5 H(+)(out). Produces ATP from ADP in the presence of a proton gradient across the membrane. The catalytic sites are hosted primarily by the beta subunits. The polypeptide is ATP synthase subunit beta (Geobacillus kaustophilus (strain HTA426)).